A 95-amino-acid chain; its full sequence is Co-chaperonin GroES (95 aa).

This sequence belongs to the GroES chaperonin family. Heptamer of 7 subunits arranged in a ring. Interacts with the chaperonin GroEL.

It localises to the cytoplasm. Its function is as follows. Together with the chaperonin GroEL, plays an essential role in assisting protein folding. The GroEL-GroES system forms a nano-cage that allows encapsulation of the non-native substrate proteins and provides a physical environment optimized to promote and accelerate protein folding. GroES binds to the apical surface of the GroEL ring, thereby capping the opening of the GroEL channel. The protein is Co-chaperonin GroES of Francisella philomiragia subsp. philomiragia (strain ATCC 25017 / CCUG 19701 / FSC 153 / O#319-036).